The sequence spans 938 residues: Isoleucine--tRNA ligase (938 aa).

Residues 58 to 68 carry the 'HIGH' region motif; that stretch reads PYANGSIHIGH. Residue Lys183 is modified to N6-acetyllysine. Residue Glu561 participates in L-isoleucyl-5'-AMP binding. The 'KMSKS' region motif lies at 602–606; the sequence is KMSKS. An ATP-binding site is contributed by Lys605. Positions 901, 904, 921, and 924 each coordinate Zn(2+).

This sequence belongs to the class-I aminoacyl-tRNA synthetase family. IleS type 1 subfamily. Monomer. Zn(2+) is required as a cofactor.

The protein resides in the cytoplasm. It catalyses the reaction tRNA(Ile) + L-isoleucine + ATP = L-isoleucyl-tRNA(Ile) + AMP + diphosphate. Functionally, catalyzes the attachment of isoleucine to tRNA(Ile). As IleRS can inadvertently accommodate and process structurally similar amino acids such as valine, to avoid such errors it has two additional distinct tRNA(Ile)-dependent editing activities. One activity is designated as 'pretransfer' editing and involves the hydrolysis of activated Val-AMP. The other activity is designated 'posttransfer' editing and involves deacylation of mischarged Val-tRNA(Ile). This is Isoleucine--tRNA ligase from Escherichia coli (strain 55989 / EAEC).